Consider the following 51-residue polypeptide: MVAYWRQAGLSYIRFSQICAKAVRDALKTEFKANAEKTSGTSIKTVKIKKE.

N6-acetyllysine; alternate is present on residues lysine 21, lysine 32, and lysine 37. Lysine 21, lysine 32, and lysine 37 each carry N6-succinyllysine; alternate. Residue lysine 44 is modified to N6-acetyllysine.

Belongs to the eukaryotic ATPase epsilon family. Component of the ATP synthase complex composed at least of ATP5F1A/subunit alpha, ATP5F1B/subunit beta, ATP5MC1/subunit c (homooctomer), MT-ATP6/subunit a, MT-ATP8/subunit 8, ATP5ME/subunit e, ATP5MF/subunit f, ATP5MG/subunit g, ATP5MK/subunit k, ATP5MJ/subunit j, ATP5F1C/subunit gamma, ATP5F1D/subunit delta, ATP5F1E/subunit epsilon, ATP5PF/subunit F6, ATP5PB/subunit b, ATP5PD/subunit d, ATP5PO/subunit OSCP. ATP synthase complex consists of a soluble F(1) head domain (subunits alpha(3) and beta(3)) - the catalytic core - and a membrane F(0) domain - the membrane proton channel (subunits c, a, 8, e, f, g, k and j). These two domains are linked by a central stalk (subunits gamma, delta, and epsilon) rotating inside the F1 region and a stationary peripheral stalk (subunits F6, b, d, and OSCP).

The protein resides in the mitochondrion. It is found in the mitochondrion inner membrane. Functionally, subunit epsilon, of the mitochondrial membrane ATP synthase complex (F(1)F(0) ATP synthase or Complex V) that produces ATP from ADP in the presence of a proton gradient across the membrane which is generated by electron transport complexes of the respiratory chain. ATP synthase complex consist of a soluble F(1) head domain - the catalytic core - and a membrane F(1) domain - the membrane proton channel. These two domains are linked by a central stalk rotating inside the F(1) region and a stationary peripheral stalk. During catalysis, ATP synthesis in the catalytic domain of F(1) is coupled via a rotary mechanism of the central stalk subunits to proton translocation. In vivo, can only synthesize ATP although its ATP hydrolase activity can be activated artificially in vitro. May be essential for the assembly of F(1) and may play an important role in the incorporation of the hydrophobic subunit c into the F(1)-c oligomer rotor of the mitochondrial ATP synthase complex. The chain is ATP synthase F(1) complex subunit epsilon, mitochondrial from Rattus norvegicus (Rat).